A 523-amino-acid polypeptide reads, in one-letter code: Bifunctional purine biosynthesis protein PurH (523 aa).

Residues 1–145 (MIKQALLSVS…KNHRDVTVIV (145 aa)) form the MGS-like domain.

Belongs to the PurH family.

It carries out the reaction (6R)-10-formyltetrahydrofolate + 5-amino-1-(5-phospho-beta-D-ribosyl)imidazole-4-carboxamide = 5-formamido-1-(5-phospho-D-ribosyl)imidazole-4-carboxamide + (6S)-5,6,7,8-tetrahydrofolate. The catalysed reaction is IMP + H2O = 5-formamido-1-(5-phospho-D-ribosyl)imidazole-4-carboxamide. It functions in the pathway purine metabolism; IMP biosynthesis via de novo pathway; 5-formamido-1-(5-phospho-D-ribosyl)imidazole-4-carboxamide from 5-amino-1-(5-phospho-D-ribosyl)imidazole-4-carboxamide (10-formyl THF route): step 1/1. The protein operates within purine metabolism; IMP biosynthesis via de novo pathway; IMP from 5-formamido-1-(5-phospho-D-ribosyl)imidazole-4-carboxamide: step 1/1. The chain is Bifunctional purine biosynthesis protein PurH from Cupriavidus pinatubonensis (strain JMP 134 / LMG 1197) (Cupriavidus necator (strain JMP 134)).